A 159-amino-acid chain; its full sequence is Cyclic pyranopterin monophosphate synthase (159 aa).

Substrate contacts are provided by residues 75-77 (LCH) and 113-114 (ME). The active site involves Asp128.

Belongs to the MoaC family. Homohexamer; trimer of dimers.

It carries out the reaction (8S)-3',8-cyclo-7,8-dihydroguanosine 5'-triphosphate = cyclic pyranopterin phosphate + diphosphate. It participates in cofactor biosynthesis; molybdopterin biosynthesis. Catalyzes the conversion of (8S)-3',8-cyclo-7,8-dihydroguanosine 5'-triphosphate to cyclic pyranopterin monophosphate (cPMP). This chain is Cyclic pyranopterin monophosphate synthase, found in Aliivibrio salmonicida (strain LFI1238) (Vibrio salmonicida (strain LFI1238)).